We begin with the raw amino-acid sequence, 283 residues long: 4-hydroxy-3-methylbut-2-enyl diphosphate reductase (283 aa).

A [4Fe-4S] cluster-binding site is contributed by C12. H40 and H72 together coordinate (2E)-4-hydroxy-3-methylbut-2-enyl diphosphate. Dimethylallyl diphosphate is bound by residues H40 and H72. Residues H40 and H72 each coordinate isopentenyl diphosphate. C94 is a [4Fe-4S] cluster binding site. H122 provides a ligand contact to (2E)-4-hydroxy-3-methylbut-2-enyl diphosphate. Residue H122 participates in dimethylallyl diphosphate binding. Residue H122 coordinates isopentenyl diphosphate. E124 (proton donor) is an active-site residue. T160 provides a ligand contact to (2E)-4-hydroxy-3-methylbut-2-enyl diphosphate. C188 provides a ligand contact to [4Fe-4S] cluster. 3 residues coordinate (2E)-4-hydroxy-3-methylbut-2-enyl diphosphate: S216, N218, and S259. Dimethylallyl diphosphate-binding residues include S216, N218, and S259. Residues S216, N218, and S259 each contribute to the isopentenyl diphosphate site.

It belongs to the IspH family. [4Fe-4S] cluster serves as cofactor.

The catalysed reaction is isopentenyl diphosphate + 2 oxidized [2Fe-2S]-[ferredoxin] + H2O = (2E)-4-hydroxy-3-methylbut-2-enyl diphosphate + 2 reduced [2Fe-2S]-[ferredoxin] + 2 H(+). The enzyme catalyses dimethylallyl diphosphate + 2 oxidized [2Fe-2S]-[ferredoxin] + H2O = (2E)-4-hydroxy-3-methylbut-2-enyl diphosphate + 2 reduced [2Fe-2S]-[ferredoxin] + 2 H(+). It participates in isoprenoid biosynthesis; dimethylallyl diphosphate biosynthesis; dimethylallyl diphosphate from (2E)-4-hydroxy-3-methylbutenyl diphosphate: step 1/1. The protein operates within isoprenoid biosynthesis; isopentenyl diphosphate biosynthesis via DXP pathway; isopentenyl diphosphate from 1-deoxy-D-xylulose 5-phosphate: step 6/6. Catalyzes the conversion of 1-hydroxy-2-methyl-2-(E)-butenyl 4-diphosphate (HMBPP) into a mixture of isopentenyl diphosphate (IPP) and dimethylallyl diphosphate (DMAPP). Acts in the terminal step of the DOXP/MEP pathway for isoprenoid precursor biosynthesis. The polypeptide is 4-hydroxy-3-methylbut-2-enyl diphosphate reductase (Dictyoglomus thermophilum (strain ATCC 35947 / DSM 3960 / H-6-12)).